The sequence spans 312 residues: Metaxin-1 homolog (312 aa).

A helical membrane pass occupies residues 282–302 (ILFTIGALVLSVAFAIHTGLI).

It belongs to the metaxin family. Associates with the mitochondrial contact site and cristae organizing system (MICOS) complex (also known as MINOS or MitOS complex).

It localises to the mitochondrion outer membrane. Its function is as follows. Involved in transport of proteins into the mitochondrion. Essential for embryonic development. This chain is Metaxin-1 homolog, found in Caenorhabditis briggsae.